The chain runs to 432 residues: MSGVVVVGAQWGDEGKGKLIDVFAEKADMVVRYQGGANAGHTLVVNGQKTVLHLVPSGILRPETTCVIASGVVIDVFSIRDEIKKLKDTGFLQNPKQLLISDTATLILPYHKALDAAREAALSDGKIGTTGKGIGPAYEDRASRRAILFGDLFDKDNLKKKLELALTEKNFMLENYYKGSTFKADDLIKDLLAVAEELAPYRTKDTSLFISKSLKSGKRVLFEGAQGTMLDILHGTYPFVTSSSTLASNACASAGIGPASVQKVIGVFKAYTTRVGSGPFPTELNDEIGKKIQADGHEFGSTTGRSRRCGWLDLVALKYAIRVNGITNLAMMKLDVLTGHDRIGVCTAYKLNGEIITDLPTSPYELEKVEPVIEWIPGWTQDLTKVKTLSDLPRPTTNYIDYLGSQLGTPIDVISVGPGREQTLWVKPLFNN.

Residues 12 to 18 (GDEGKGK) and 40 to 42 (GHT) contribute to the GTP site. Asp-13 (proton acceptor) is an active-site residue. Residues Asp-13 and Gly-40 each coordinate Mg(2+). Residues 13–16 (DEGK), 38–41 (NAGH), Thr-130, Arg-144, Gln-226, Thr-241, and Arg-305 each bind IMP. His-41 serves as the catalytic Proton donor. 301 to 307 (STTGRSR) contacts substrate. GTP contacts are provided by residues Arg-307, 333–335 (KLD), and 415–417 (SVG).

This sequence belongs to the adenylosuccinate synthetase family. In terms of assembly, homodimer. It depends on Mg(2+) as a cofactor.

It localises to the cytoplasm. The enzyme catalyses IMP + L-aspartate + GTP = N(6)-(1,2-dicarboxyethyl)-AMP + GDP + phosphate + 2 H(+). It participates in purine metabolism; AMP biosynthesis via de novo pathway; AMP from IMP: step 1/2. In terms of biological role, plays an important role in the de novo pathway of purine nucleotide biosynthesis. Catalyzes the first committed step in the biosynthesis of AMP from IMP. The sequence is that of Adenylosuccinate synthetase from Bdellovibrio bacteriovorus (strain ATCC 15356 / DSM 50701 / NCIMB 9529 / HD100).